We begin with the raw amino-acid sequence, 451 residues long: Bifunctional protein GlmU (451 aa).

The tract at residues 1-217 (MKTLILAAGL…IDEVTGVNDR (217 aa)) is pyrophosphorylase. UDP-N-acetyl-alpha-D-glucosamine contacts are provided by residues 6-9 (LAAG), Lys-20, Gln-68, 73-74 (GT), 95-97 (YGD), Gly-134, Glu-146, Asn-161, and Asn-215. Asp-97 contacts Mg(2+). Residue Asn-215 participates in Mg(2+) binding. The tract at residues 218-238 (IQLSKLEKNMRKRINEKLMRE) is linker. The segment at 239 to 451 (GVRIIDPESV…GGNQNADSKE (213 aa)) is N-acetyltransferase. The UDP-N-acetyl-alpha-D-glucosamine site is built by Arg-320 and Lys-338. His-350 functions as the Proton acceptor in the catalytic mechanism. Positions 353 and 364 each coordinate UDP-N-acetyl-alpha-D-glucosamine. Residues Ala-367, 373 to 374 (NY), Ser-392, Ala-410, and Arg-427 contribute to the acetyl-CoA site.

It in the N-terminal section; belongs to the N-acetylglucosamine-1-phosphate uridyltransferase family. The protein in the C-terminal section; belongs to the transferase hexapeptide repeat family. As to quaternary structure, homotrimer. Mg(2+) is required as a cofactor.

It localises to the cytoplasm. It catalyses the reaction alpha-D-glucosamine 1-phosphate + acetyl-CoA = N-acetyl-alpha-D-glucosamine 1-phosphate + CoA + H(+). It carries out the reaction N-acetyl-alpha-D-glucosamine 1-phosphate + UTP + H(+) = UDP-N-acetyl-alpha-D-glucosamine + diphosphate. It functions in the pathway nucleotide-sugar biosynthesis; UDP-N-acetyl-alpha-D-glucosamine biosynthesis; N-acetyl-alpha-D-glucosamine 1-phosphate from alpha-D-glucosamine 6-phosphate (route II): step 2/2. It participates in nucleotide-sugar biosynthesis; UDP-N-acetyl-alpha-D-glucosamine biosynthesis; UDP-N-acetyl-alpha-D-glucosamine from N-acetyl-alpha-D-glucosamine 1-phosphate: step 1/1. The protein operates within bacterial outer membrane biogenesis; LPS lipid A biosynthesis. Functionally, catalyzes the last two sequential reactions in the de novo biosynthetic pathway for UDP-N-acetylglucosamine (UDP-GlcNAc). The C-terminal domain catalyzes the transfer of acetyl group from acetyl coenzyme A to glucosamine-1-phosphate (GlcN-1-P) to produce N-acetylglucosamine-1-phosphate (GlcNAc-1-P), which is converted into UDP-GlcNAc by the transfer of uridine 5-monophosphate (from uridine 5-triphosphate), a reaction catalyzed by the N-terminal domain. This is Bifunctional protein GlmU from Thermosipho africanus (strain TCF52B).